The primary structure comprises 60 residues: Large ribosomal subunit protein bL32 (60 aa).

The protein belongs to the bacterial ribosomal protein bL32 family.

The protein is Large ribosomal subunit protein bL32 of Borreliella afzelii (strain PKo) (Borrelia afzelii).